A 336-amino-acid polypeptide reads, in one-letter code: Biotin synthase (336 aa).

Residues 54–281 enclose the Radical SAM core domain; sequence NAIQLSTLLS…KAMVRLSAGR (228 aa). Cys-69, Cys-73, and Cys-76 together coordinate [4Fe-4S] cluster. [2Fe-2S] cluster-binding residues include Cys-113, Cys-144, Cys-204, and Arg-276.

Belongs to the radical SAM superfamily. Biotin synthase family. Homodimer. [4Fe-4S] cluster serves as cofactor. The cofactor is [2Fe-2S] cluster.

It catalyses the reaction (4R,5S)-dethiobiotin + (sulfur carrier)-SH + 2 reduced [2Fe-2S]-[ferredoxin] + 2 S-adenosyl-L-methionine = (sulfur carrier)-H + biotin + 2 5'-deoxyadenosine + 2 L-methionine + 2 oxidized [2Fe-2S]-[ferredoxin]. It functions in the pathway cofactor biosynthesis; biotin biosynthesis; biotin from 7,8-diaminononanoate: step 2/2. In terms of biological role, catalyzes the conversion of dethiobiotin (DTB) to biotin by the insertion of a sulfur atom into dethiobiotin via a radical-based mechanism. This Burkholderia mallei (strain ATCC 23344) protein is Biotin synthase.